Here is a 65-residue protein sequence, read N- to C-terminus: Toxin CsEM1 (65 aa).

Residues 1–65 form the LCN-type CS-alpha/beta domain; it reads KEGYLVNSYT…VWPLPNKTCN (65 aa). Intrachain disulfides connect Cys12/Cys64, Cys16/Cys40, Cys25/Cys45, and Cys29/Cys47.

The protein belongs to the long (4 C-C) scorpion toxin superfamily. Sodium channel inhibitor family. Beta subfamily. Expressed by the venom gland.

Its subcellular location is the secreted. Its function is as follows. Beta toxins bind voltage-independently at site-4 of sodium channels (Nav) and shift the voltage of activation toward more negative potentials thereby affecting sodium channel activation and promoting spontaneous and repetitive firing. Highly potent. The protein is Toxin CsEM1 of Centruroides sculpturatus (Arizona bark scorpion).